Reading from the N-terminus, the 312-residue chain is Glycine--tRNA ligase alpha subunit (312 aa).

It belongs to the class-II aminoacyl-tRNA synthetase family. In terms of assembly, tetramer of two alpha and two beta subunits.

The protein resides in the cytoplasm. The enzyme catalyses tRNA(Gly) + glycine + ATP = glycyl-tRNA(Gly) + AMP + diphosphate. This is Glycine--tRNA ligase alpha subunit from Delftia acidovorans (strain DSM 14801 / SPH-1).